The sequence spans 120 residues: Putative gamma-glutamylcyclotransferase MJ1514 (120 aa).

Substrate is bound at residue 7-10; it reads YGSL. Residue E74 is the Proton acceptor of the active site.

The protein belongs to the gamma-glutamylcyclotransferase family.

Its function is as follows. Putative gamma-glutamylcyclotransferase. The polypeptide is Putative gamma-glutamylcyclotransferase MJ1514 (Methanocaldococcus jannaschii (strain ATCC 43067 / DSM 2661 / JAL-1 / JCM 10045 / NBRC 100440) (Methanococcus jannaschii)).